The chain runs to 554 residues: uncharacterized protein (554 aa).

The interval 1 to 25 (MSSSIPPRLYDMSPTESKKQEDVSE) is disordered. Ser-13 is modified (phosphoserine). 6 consecutive transmembrane segments (helical) span residues 82 to 102 (FFVA…TSLI), 120 to 140 (APYL…VWSL), 149 to 169 (WAFN…GASP), 171 to 191 (FASI…NLPV), 210 to 230 (VMSF…WGLI), and 253 to 273 (FLFT…LVSV). Ser-334 bears the Phosphoserine mark. 6 consecutive transmembrane segments (helical) span residues 364 to 384 (LAIS…AFPL), 412 to 432 (SLIV…LVEF), 437 to 457 (KGTL…STTA), 462 to 482 (AYLG…GVLY), 497 to 517 (AVGL…VIAM), and 525 to 545 (APIF…VFFP).

The protein belongs to the major facilitator superfamily.

It localises to the endoplasmic reticulum. Its subcellular location is the membrane. This is an uncharacterized protein from Schizosaccharomyces pombe (strain 972 / ATCC 24843) (Fission yeast).